Here is a 684-residue protein sequence, read N- to C-terminus: Leishmanolysin-like peptidase (684 aa).

His-257 is a binding site for Zn(2+). Glu-258 is an active-site residue. Zn(2+) contacts are provided by His-261 and His-364.

This sequence belongs to the peptidase M8 family. The cofactor is Zn(2+).

It localises to the cytoplasm. Essential for the coordination of mitotic progression, and also plays a role in cell migration. The chain is Leishmanolysin-like peptidase from Drosophila pseudoobscura pseudoobscura (Fruit fly).